Consider the following 478-residue polypeptide: ATP-dependent RNA helicase DDX19A (478 aa).

An N-acetylalanine modification is found at A2. Residues 2-299 (ATDSWALAVD…DPNIIKLKRE (298 aa)) form an N-terminal lobe region. K26 is covalently cross-linked (Glycyl lysine isopeptide (Lys-Gly) (interchain with G-Cter in SUMO1); alternate). A Glycyl lysine isopeptide (Lys-Gly) (interchain with G-Cter in SUMO2); alternate cross-link involves residue K26. Residues 34–53 (TNGVIKTSTTAEKTEEEEKE) form a disordered region. T42 is modified (phosphothreonine). An N-terminal helix region spans residues 54-67 (DRAAQSLLNKLIRS). The short motif at 91–119 (KSFEELRLKPQLLQGVYAMGFNRPSKIQE) is the Q motif element. Residues Q118 and 137 to 144 (SQSGTGKT) contribute to the ATP site. Positions 124-294 (MMLAEPPQNL…QKVVPDPNII (171 aa)) constitute a Helicase ATP-binding domain. The short motif at 241–244 (DEAD) is the DEAD box element. The interval 300-478 (EETLDTIKQY…DLDEIEKIAN (179 aa)) is C-terminal lobe. Positions 305-473 (TIKQYYVLCN…RLDTDDLDEI (169 aa)) constitute a Helicase C-terminal domain. ATP contacts are provided by R428 and R431.

The protein belongs to the DEAD box helicase family. DDX19/DBP5 subfamily. Found in testis, heart, brain, liver, skeletal muscle, and kidney.

It localises to the cytoplasm. Its subcellular location is the nucleus. The protein localises to the nucleoplasm. It catalyses the reaction ATP + H2O = ADP + phosphate + H(+). ATP-dependent RNA helicase involved in mRNA export from the nucleus. Rather than unwinding RNA duplexes, DDX19 functions as a remodeler of ribonucleoprotein particles, whereby proteins bound to nuclear mRNA are dissociated and replaced by cytoplasmic mRNA binding proteins. The polypeptide is ATP-dependent RNA helicase DDX19A (Ddx19a) (Mus musculus (Mouse)).